We begin with the raw amino-acid sequence, 45 residues long: Thymosin beta (45 aa).

Residues 1 to 45 are disordered; that stretch reads MADKPNMTEITSFDKTKLRKTETQEKNPLPTKETIEQERQGESTP. 2 stretches are compositionally biased toward basic and acidic residues: residues 12–25 and 33–45; these read SFDKTKLRKTETQE and ETIEQERQGESTP.

Belongs to the thymosin beta family.

The protein localises to the cytoplasm. It is found in the cytoskeleton. Plays an important role in the organization of the cytoskeleton. Binds to and sequesters actin monomers (G actin) and therefore inhibits actin polymerization. This chain is Thymosin beta (tmsb), found in Danio rerio (Zebrafish).